The sequence spans 537 residues: Methylmalonate-semialdehyde/malonate-semialdehyde dehydrogenase [acylating], mitochondrial (537 aa).

Residues methionine 1–phenylalanine 34 constitute a mitochondrion transit peptide. N6-acetyllysine; alternate is present on residues lysine 49, lysine 54, lysine 57, and lysine 78. 4 positions are modified to N6-succinyllysine; alternate: lysine 49, lysine 54, lysine 57, and lysine 78. Lysine 89 bears the N6-acetyllysine mark. An N6-acetyllysine; alternate mark is found at lysine 119 and lysine 131. N6-succinyllysine; alternate occurs at positions 119 and 131. The NAD(+) site is built by alanine 185, phenylalanine 187, lysine 211, glutamate 214, arginine 215, and serine 264. Serine 264 bears the Phosphoserine mark. Lysine 300 bears the N6-acetyllysine mark. Cysteine 319 serves as the catalytic Nucleophile. N6-acetyllysine occurs at positions 332 and 333. N6-acetyllysine; alternate is present on residues lysine 366 and lysine 378. N6-succinyllysine; alternate occurs at positions 366 and 378. Serine 382 carries the post-translational modification Phosphoserine. Lysine 393 is subject to N6-succinyllysine. Position 419 (glutamate 419) interacts with NAD(+). Lysine 502 carries the N6-acetyllysine modification. Lysine 519 carries the N6-succinyllysine modification.

It belongs to the aldehyde dehydrogenase family. In terms of assembly, homodimer. The N-terminus is blocked.

It localises to the mitochondrion. The enzyme catalyses 2-methyl-3-oxopropanoate + NAD(+) + CoA + H2O = propanoyl-CoA + hydrogencarbonate + NADH + H(+). The catalysed reaction is 3-oxopropanoate + NAD(+) + CoA + H2O = hydrogencarbonate + acetyl-CoA + NADH + H(+). It carries out the reaction (R)-2-methyl-3-oxopropanoate + NAD(+) + CoA + H2O = propanoyl-CoA + hydrogencarbonate + NADH + H(+). It catalyses the reaction (S)-2-methyl-3-oxopropanoate + NAD(+) + CoA + H2O = propanoyl-CoA + hydrogencarbonate + NADH + H(+). Malonate and methylmalonate semialdehyde dehydrogenase involved in the catabolism of valine, thymine, and compounds catabolized by way of beta-alanine, including uracil and cytidine. The polypeptide is Methylmalonate-semialdehyde/malonate-semialdehyde dehydrogenase [acylating], mitochondrial (ALDH6A1) (Bos taurus (Bovine)).